Here is a 175-residue protein sequence, read N- to C-terminus: Respiratory supercomplex factor 1-B, mitochondrial (175 aa).

The HIG1 domain occupies 3–94 (DQADVLADPD…TERKQRREFE (92 aa)). 2 consecutive transmembrane segments (helical) span residues 30–46 (PLIP…LYRA) and 66–83 (IYAQ…GMYY). A coiled-coil region spans residues 83–115 (YKTERKQRREFEKKVEERKAQEKRDAWLRELEA).

This sequence belongs to the RCF1 family. Associates with the respiratory chain complex III/complex IV supercomplex.

The protein localises to the mitochondrion membrane. Its function is as follows. Cytochrome c oxidase subunit which plays a role in assembly of respiratory supercomplexes. This chain is Respiratory supercomplex factor 1-B, mitochondrial (rcf1-B), found in Talaromyces marneffei (strain ATCC 18224 / CBS 334.59 / QM 7333) (Penicillium marneffei).